The following is a 75-amino-acid chain: uncharacterized protein (75 aa).

This is an uncharacterized protein from Acidianus filamentous virus 1 (isolate United States/Yellowstone) (AFV-1).